A 175-amino-acid chain; its full sequence is Bifunctional protein PyrR (175 aa).

Residues 40 to 41, 102 to 110, Arg135, and Val159 contribute to the substrate site; these read TR and DDVLYTGRT. The PRPP-binding signature appears at 98–110; the sequence is VVIIDDVLYTGRT.

It belongs to the purine/pyrimidine phosphoribosyltransferase family. PyrR subfamily. As to quaternary structure, homodimer and homohexamer; in equilibrium.

The catalysed reaction is UMP + diphosphate = 5-phospho-alpha-D-ribose 1-diphosphate + uracil. Its function is as follows. Regulates transcriptional attenuation of the pyrimidine nucleotide (pyr) operon by binding in a uridine-dependent manner to specific sites on pyr mRNA. This disrupts an antiterminator hairpin in the RNA and favors formation of a downstream transcription terminator, leading to a reduced expression of downstream genes. Functionally, also displays a weak uracil phosphoribosyltransferase activity which is not physiologically significant. The polypeptide is Bifunctional protein PyrR (Staphylococcus epidermidis (strain ATCC 12228 / FDA PCI 1200)).